We begin with the raw amino-acid sequence, 362 residues long: MEELKELRKEIDRIDEEILRLLNERAKLAKRIGEIKSKANLPIHVPEREREIFEKILRLNKEVYGGVFPQEALVHIYREIISACLSLEKKIKVAYLGPKATFTHQAALEFFGFSAHYTPCSTIRDVFVEVETKRADYGVVPVENTIEGVVNYTLDMFLESDVKIAGEIVIPITLHLLSASDSIENVEKVYSHKMALAQCRSWLEKNLPSVQVIEVESTAKACEIALEDERAGAVASEVAAYTYHLNILARNIQDSGDNFTRFLVIAKRDLKPTGSDKTSILFGVKDEPGALYKALEVFYKHGINLTKIESRPSKKKAWDYVFFVDLEGHKEEERVEKALKELKEKTQFLKVLGSYPKALLQE.

The region spanning 1–92 is the Chorismate mutase domain; the sequence is MEELKELRKE…ACLSLEKKIK (92 aa). Substrate contacts are provided by R8, R25, K36, and E49. Residues 93–267 enclose the Prephenate dehydratase domain; the sequence is VAYLGPKATF…NFTRFLVIAK (175 aa). Residues 279 to 356 enclose the ACT domain; sequence SILFGVKDEP…QFLKVLGSYP (78 aa).

Its subcellular location is the cytoplasm. The enzyme catalyses chorismate = prephenate. The catalysed reaction is prephenate + H(+) = 3-phenylpyruvate + CO2 + H2O. It participates in amino-acid biosynthesis; L-phenylalanine biosynthesis; phenylpyruvate from prephenate: step 1/1. It functions in the pathway metabolic intermediate biosynthesis; prephenate biosynthesis; prephenate from chorismate: step 1/1. Its function is as follows. Catalyzes the Claisen rearrangement of chorismate to prephenate and the decarboxylation/dehydration of prephenate to phenylpyruvate. In Aquifex aeolicus (strain VF5), this protein is Bifunctional chorismate mutase/prephenate dehydratase (pheA).